The following is a 647-amino-acid chain: Methyl-accepting chemotaxis protein McpK (647 aa).

The Cytoplasmic portion of the chain corresponds to 1–16 (MYDWWVLQLAKLSVSR). The helical transmembrane segment at 17–37 (KLMVGFGVLLALLLLVVISSN) threads the bilayer. Residues 38-291 (RTLTHQTALS…LRESTASRDR (254 aa)) are Periplasmic-facing. The 243-residue stretch at 45–287 (ALSEQLAEVA…AGRQLRESTA (243 aa)) folds into the HBM domain. Residues 292 to 312 (ASLWLIAALALAFGCVAGWAI) form a helical membrane-spanning segment. The Cytoplasmic segment spans residues 313–647 (NRQIVRPLDE…LQAQVGRFRL (335 aa)). The HAMP domain occupies 314-370 (RQIVRPLDEALAQAEAIAAGDLGKRPQNPLTLQRRDELGQLQRVMQRMGDSLRELVG). Positions 375-611 (GVSQLASSAE…EINRSVLSVR (237 aa)) constitute a Methyl-accepting transducer domain.

It belongs to the methyl-accepting chemotaxis (MCP) protein family. In terms of assembly, ligand free ligand-binding domain (LBD) is present in a monomer-dimer equilibrium. AlphaKG binding stabilizes the homodimer.

It is found in the cell inner membrane. In terms of biological role, chemotactic-signal transducers respond to changes in the concentration of attractants and repellents in the environment, transduce a signal from the outside to the inside of the cell, and facilitate sensory adaptation through the variation of the level of methylation. McpK is a chemoreceptor that specifically binds and mediates chemotaxis to alpha-ketoglutarate (alphaKG). The chain is Methyl-accepting chemotaxis protein McpK from Pseudomonas aeruginosa (strain ATCC 15692 / DSM 22644 / CIP 104116 / JCM 14847 / LMG 12228 / 1C / PRS 101 / PAO1).